Here is a 314-residue protein sequence, read N- to C-terminus: Malate dehydrogenase (314 aa).

NAD(+)-binding positions include 11 to 16 (GSGNIG) and aspartate 35. Residues arginine 84 and arginine 90 each contribute to the substrate site. NAD(+)-binding positions include asparagine 97 and 120 to 122 (ITN). 2 residues coordinate substrate: asparagine 122 and arginine 153. Histidine 177 acts as the Proton acceptor in catalysis.

Belongs to the LDH/MDH superfamily. MDH type 3 family.

It catalyses the reaction (S)-malate + NAD(+) = oxaloacetate + NADH + H(+). Catalyzes the reversible oxidation of malate to oxaloacetate. The polypeptide is Malate dehydrogenase (Rickettsia felis (strain ATCC VR-1525 / URRWXCal2) (Rickettsia azadi)).